The following is a 545-amino-acid chain: CTP synthase (545 aa).

An amidoligase domain region spans residues M1–L265. S13 contacts CTP. S13 is a UTP binding site. Residues S14–I19 and D71 contribute to the ATP site. Positions 71 and 139 each coordinate Mg(2+). CTP contacts are provided by residues D146–E148, K186–Q191, and K222. UTP is bound by residues K186–Q191 and K222. The region spanning K290 to E541 is the Glutamine amidotransferase type-1 domain. G351 contacts L-glutamine. The active-site Nucleophile; for glutamine hydrolysis is the C378. Residues L379–Q382, E402, and R469 contribute to the L-glutamine site. Catalysis depends on residues H514 and E516.

This sequence belongs to the CTP synthase family. In terms of assembly, homotetramer.

It carries out the reaction UTP + L-glutamine + ATP + H2O = CTP + L-glutamate + ADP + phosphate + 2 H(+). It catalyses the reaction L-glutamine + H2O = L-glutamate + NH4(+). The catalysed reaction is UTP + NH4(+) + ATP = CTP + ADP + phosphate + 2 H(+). It functions in the pathway pyrimidine metabolism; CTP biosynthesis via de novo pathway; CTP from UDP: step 2/2. Its activity is regulated as follows. Allosterically activated by GTP, when glutamine is the substrate; GTP has no effect on the reaction when ammonia is the substrate. The allosteric effector GTP functions by stabilizing the protein conformation that binds the tetrahedral intermediate(s) formed during glutamine hydrolysis. Inhibited by the product CTP, via allosteric rather than competitive inhibition. Functionally, catalyzes the ATP-dependent amination of UTP to CTP with either L-glutamine or ammonia as the source of nitrogen. Regulates intracellular CTP levels through interactions with the four ribonucleotide triphosphates. The chain is CTP synthase from Legionella pneumophila (strain Corby).